A 3014-amino-acid chain; its full sequence is Cadherin EGF LAG seven-pass G-type receptor 1 (3014 aa).

The signal sequence occupies residues 1–20 (MAPPPPPVLPVLLLLAAAAA). The Extracellular segment spans residues 22-2469 (PAMGLRAAAW…RENGEVLPLK (2448 aa)). The disordered stretch occupies residues 205-242 (AGTPSASPSPSPPLPPNLPEARAGPARRARRGTSGRGS). The segment covering 211–222 (SPSPSPPLPPNL) has biased composition (pro residues). 9 Cadherin domains span residues 246-353 (PMPN…SPVF), 354-459 (EQSE…YPQF), 460-565 (SEQN…EPIF), 566-687 (VSSP…DPVF), 688-789 (TQPT…RPVF), 790-892 (QSSH…APQF), 893-999 (LWDF…APMF), 1000-1101 (EKDE…PPVL), and 1106-1224 (ILFN…SPLL). N-linked (GlcNAc...) asparagine glycosylation is found at Asn403, Asn546, Asn634, and Asn778. Asn1114, Asn1139, Asn1213, Asn1249, Asn1259, and Asn1287 each carry an N-linked (GlcNAc...) asparagine glycan. One can recognise an EGF-like 1; calcium-binding domain in the interval 1303-1361 (DDNICLREPCENYMKCVSVLRFDSSAPFLSSTTVLFRPIHPINGLRCRCPPGFTGDYCE). Intrachain disulfides connect Cys1307/Cys1318, Cys1312/Cys1349, Cys1351/Cys1360, Cys1367/Cys1378, Cys1372/Cys1387, Cys1389/Cys1398, Cys1407/Cys1418, Cys1412/Cys1428, and Cys1430/Cys1440. One can recognise an EGF-like 2; calcium-binding domain in the interval 1363 to 1399 (EIDLCYSDPCGANGRCRSREGGYTCECFEDFTGEHCE). The EGF-like 3; calcium-binding domain maps to 1403–1441 (RSGRCANGVCKNGGTCVNLLIGGFHCVCPPGEYERPYCE). Residues 1442–1646 (VTTRSFPPQS…IANNGTREGC (205 aa)) form the Laminin G-like 1 domain. Asn1576, Asn1623, and Asn1640 each carry an N-linked (GlcNAc...) asparagine glycan. 13 disulfides stabilise this stretch: Cys1620/Cys1646, Cys1653/Cys1664, Cys1658/Cys1673, Cys1675/Cys1684, Cys1840/Cys1870, Cys1876/Cys1887, Cys1881/Cys1896, Cys1898/Cys1907, Cys1911/Cys1922, Cys1916/Cys1934, Cys1936/Cys1945, Cys1953/Cys1966, and Cys1968/Cys1978. In terms of domain architecture, EGF-like 4; calcium-binding spans 1649–1685 (RRNFCDGRRCQNGGTCVNRWNMYLCECPLRFGGKNCE). Asn1666 is subject to (3R)-3-hydroxyasparagine. Residues 1689-1870 (PHPQLFSGES…ALKVRVKDGC (182 aa)) enclose the Laminin G-like 2 domain. The EGF-like 5; calcium-binding domain maps to 1872-1907 (VDDPCTSSPCPPNSRCHDAWEDYSCVCDKGYLGINC). Asp1889 is subject to (3R)-3-hydroxyaspartate. In terms of domain architecture, EGF-like 6; calcium-binding spans 1908 to 1946 (VDACHLNPCENMGACVRSPGSPQGYVCECGPSHYGPYCE). Residues 1947-1979 (NKLDLPCPRGWWGNPVCGPCHCAVSKGFDPDCN) form the EGF-like 7; calcium-binding domain. A glycan (N-linked (GlcNAc...) asparagine) is linked at Asn1979. The EGF-like 8; calcium-binding domain maps to 1981–2016 (TNGQCQCKENYYKLLAQDTCLPCDCFPHGSHSRTCD). Disulfide bonds link Cys1985-Cys2000, Cys1987-Cys2003, Cys2005-Cys2015, Cys2024-Cys2033, and Cys2036-Cys2048. The Laminin EGF-like domain maps to 2003–2050 (CDCFPHGSHSRTCDMATGQCACKPGVIGRQCNRCDNPFAEVTTLGCEV). 3 N-linked (GlcNAc...) asparagine glycosylation sites follow: Asn2103, Asn2122, and Asn2257. Residues 2291–2328 (PEEKEGPLLRPAGRRTTPQTTRPGPGTEREAPISRRRR) are disordered. The GAIN-B domain maps to 2297 to 2461 (PLLRPAGRRT…AVLMDISRRE (165 aa)). The span at 2300-2316 (RPAGRRTTPQTTRPGPG) shows a compositional bias: low complexity. Disulfide bonds link Cys2411-Cys2443 and Cys2431-Cys2445. The tract at residues 2411 to 2461 (CVFWNHSLAVGGTGGWSARGCELLSRNRTHVACQCSHTASFAVLMDISRRE) is GPS. Residues Asn2415 and Asn2437 are each glycosylated (N-linked (GlcNAc...) asparagine). A helical transmembrane segment spans residues 2470 to 2490 (IVTYAAVSLSLAALLVAFVLL). Residues 2491-2501 (SLVRMLRSNLH) lie on the Cytoplasmic side of the membrane. Residues 2502-2522 (SIHKHLAVALFLSQLVFVIGI) form a helical membrane-spanning segment. An N-linked (GlcNAc...) asparagine glycan is attached at Asn2523. Topologically, residues 2523–2527 (NQTEN) are extracellular. A helical membrane pass occupies residues 2528–2548 (PFLCTVVAILLHYIYMSTFAW). Residues 2549–2572 (TLVESLHVYRMLTEVRNIDTGPMR) are Cytoplasmic-facing. Residues 2573 to 2593 (FYYVVGWGIPAIVTGLAVGLD) traverse the membrane as a helical segment. Topologically, residues 2594 to 2611 (PQGYGNPDFCWLSLQDTL) are extracellular. The helical transmembrane segment at 2612–2632 (IWSFAGPIGAVIIINTVTSVL) threads the bilayer. Over 2633–2655 (SAKVSCQRKHHYYGKKGIVSLLR) the chain is Cytoplasmic. The helical transmembrane segment at 2656–2676 (TAFLLLLLISATWLLGLLAVN) threads the bilayer. Residues 2677–2683 (RDALSFH) are Extracellular-facing. The chain crosses the membrane as a helical span at residues 2684–2704 (YLFAIFSGLQGPFVLLFHCVL). The Cytoplasmic portion of the chain corresponds to 2705-3014 (NQEVRKHLKG…QADGSDSEKP (310 aa)). A phosphoserine mark is found at Ser2761 and Ser2764. Disordered stretches follow at residues 2777–2939 (SSGL…PPPL) and 2954–3014 (LADC…SEKP). The segment covering 2796–2806 (SCKDPPGHDSD) has biased composition (basic and acidic residues). The span at 2814–2825 (DEQSSSYASSHS) shows a compositional bias: low complexity. A phosphoserine mark is found at Ser2871 and Ser2873. Residues 2876-2904 (PSGKPRLKVETKVSVELHREEQGSHRGEY) are compositionally biased toward basic and acidic residues. A compositionally biased stretch (low complexity) spans 2960 to 2969 (SPTSSRTSSL). Basic and acidic residues predominate over residues 2983 to 2992 (PGREPGRDHL).

It belongs to the G-protein coupled receptor 2 family. LN-TM7 subfamily. Post-translationally, the iron and 2-oxoglutarate dependent 3-hydroxylation of aspartate and asparagine is (R) stereospecific within EGF domains.

The protein localises to the cell membrane. In terms of biological role, receptor that may have an important role in cell/cell signaling during nervous system formation. In Homo sapiens (Human), this protein is Cadherin EGF LAG seven-pass G-type receptor 1 (CELSR1).